We begin with the raw amino-acid sequence, 594 residues long: UvrABC system protein C (594 aa).

The 78-residue stretch at 15-92 (DKPGCYQMKN…IQKFQPYYNI (78 aa)) folds into the GIY-YIG domain. The 36-residue stretch at 197-232 (AKIKQSLQTKMQKASEAMEFERAADIRDQIHYIEVT) folds into the UVR domain.

Belongs to the UvrC family. Interacts with UvrB in an incision complex.

It localises to the cytoplasm. In terms of biological role, the UvrABC repair system catalyzes the recognition and processing of DNA lesions. UvrC both incises the 5' and 3' sides of the lesion. The N-terminal half is responsible for the 3' incision and the C-terminal half is responsible for the 5' incision. The chain is UvrABC system protein C from Pediococcus pentosaceus (strain ATCC 25745 / CCUG 21536 / LMG 10740 / 183-1w).